The sequence spans 570 residues: Formate--tetrahydrofolate ligase (570 aa).

ATP is bound at residue 65–72 (TPHGEGKT).

It belongs to the formate--tetrahydrofolate ligase family.

It catalyses the reaction (6S)-5,6,7,8-tetrahydrofolate + formate + ATP = (6R)-10-formyltetrahydrofolate + ADP + phosphate. It functions in the pathway one-carbon metabolism; tetrahydrofolate interconversion. The chain is Formate--tetrahydrofolate ligase from Shewanella sp. (strain ANA-3).